The following is a 398-amino-acid chain: MARSGPEVADIFRRYGEAYRAQHTSLSTAQRRVMTAIELCRTAALGGHVEACDQCGHRRIAFNSCRDRHCPRCQSLARAQWLEDRRAELLETQYFHVVFTLPEAIAAIAYQNKALVYGLLFRATAETLRTIAADPRHLGAEIGFFAVLHTWGQNLLHHPHLHCVVPGGGFSPDGTQWIACKPGFFLPVRVLSRLFRRLFLEHLEKAFDGGKLQFFSDLRALNERNAFRRYLAPLRKAEWVVFAKPPFAGPEQVLDYVGRYTHRVAISNNRLVDIEDGAVRFRWKDYRHGDRQKVMTVSTDEFIRRFLLHVLPEGFHRIRYYGFLGNRYREQKLAQCRDLLGMSVPAPSETQAPKEYRDRYEELTGRSLRQCPACHQGQMITIEIFDGVTGPPRCWDTS.

This sequence belongs to the transposase 32 family.

This is Putative transposase y4qJ from Sinorhizobium fredii (strain NBRC 101917 / NGR234).